A 365-amino-acid chain; its full sequence is Probable tRNA pseudouridine synthase B (365 aa).

Residue Asp-43 is the Nucleophile of the active site. Positions 209-285 constitute a PUA domain; sequence YPKIVVKRSA…DHIFLEADDG (77 aa). Residues 300 to 365 are disordered; the sequence is SGSGLHKDIQ…GKERHGRDHQ (66 aa). 3 stretches are compositionally biased toward basic and acidic residues: residues 304–318, 326–336, and 354–365; these read LHKD…KDTR, TGPEKTADRVW, and GGGKERHGRDHQ.

It belongs to the pseudouridine synthase TruB family. Type 2 subfamily.

The catalysed reaction is uridine(55) in tRNA = pseudouridine(55) in tRNA. Could be responsible for synthesis of pseudouridine from uracil-55 in the psi GC loop of transfer RNAs. This chain is Probable tRNA pseudouridine synthase B, found in Thermoplasma acidophilum (strain ATCC 25905 / DSM 1728 / JCM 9062 / NBRC 15155 / AMRC-C165).